The chain runs to 500 residues: Galactofuranose transporter ATP-binding protein YtfR (500 aa).

ABC transporter domains follow at residues 10-245 and 259-497; these read LRTE…LGRE and LSDK…IMNA. 42 to 49 provides a ligand contact to ATP; it reads GENGAGKS.

The protein belongs to the ABC transporter superfamily. As to quaternary structure, the complex is composed of two ATP-binding proteins (YtfR), two transmembrane proteins (YtfT and YjfF) and a solute-binding protein (YtfQ).

Its subcellular location is the cell inner membrane. The enzyme catalyses D-galactofuranose(out) + ATP + H2O = D-galactofuranose(in) + ADP + phosphate + H(+). Functionally, part of the ABC transporter complex YtfQRT-YjfF involved in galactofuranose transport. Responsible for energy coupling to the transport system. In Escherichia coli (strain K12), this protein is Galactofuranose transporter ATP-binding protein YtfR (ytfR).